Reading from the N-terminus, the 1419-residue chain is L-2-aminoadipate reductase (1419 aa).

One can recognise a Carrier domain in the interval E880–K956. S916 bears the O-(pantetheine 4'-phosphoryl)serine mark.

The protein belongs to the ATP-dependent AMP-binding enzyme family. Requires pantetheine 4'-phosphate as cofactor.

Its subcellular location is the cytoplasm. The catalysed reaction is (S)-2-amino-6-oxohexanoate + NADP(+) + H2O = L-2-aminoadipate + NADPH + 2 H(+). It catalyses the reaction (S)-2-amino-6-oxohexanoate + NAD(+) + H2O = L-2-aminoadipate + NADH + 2 H(+). The enzyme catalyses (S)-2-amino-6-oxohexanoate + AMP + diphosphate + NADP(+) = L-2-aminoadipate + ATP + NADPH + H(+). The protein operates within amino-acid biosynthesis; L-lysine biosynthesis via AAA pathway; L-lysine from L-alpha-aminoadipate (fungal route): step 1/3. In terms of biological role, catalyzes the activation of alpha-aminoadipate by ATP-dependent adenylation and the reduction of activated alpha-aminoadipate by NADPH. The activated alpha-aminoadipate is bound to the phosphopantheinyl group of the enzyme itself before it is reduced to (S)-2-amino-6-oxohexanoate. The polypeptide is L-2-aminoadipate reductase (lys1) (Schizosaccharomyces pombe (strain 972 / ATCC 24843) (Fission yeast)).